The primary structure comprises 320 residues: L-lactate dehydrogenase 1 (320 aa).

Residues Val18, Asp39, Arg44, Tyr69, and 83 to 84 each bind NAD(+); that span reads GA. 2 residues coordinate substrate: Gln86 and Arg92. NAD(+)-binding positions include Ser105, 122–124, and Ser147; that span reads AAN. 124–127 contacts substrate; sequence NPVD. Position 152-155 (152-155) interacts with substrate; it reads DSSR. His179 acts as the Proton acceptor in catalysis. At Tyr223 the chain carries Phosphotyrosine. Thr232 is a substrate binding site.

Belongs to the LDH/MDH superfamily. LDH family. In terms of assembly, homotetramer.

Its subcellular location is the cytoplasm. The catalysed reaction is (S)-lactate + NAD(+) = pyruvate + NADH + H(+). It participates in fermentation; pyruvate fermentation to lactate; (S)-lactate from pyruvate: step 1/1. Its function is as follows. Catalyzes the conversion of lactate to pyruvate. The sequence is that of L-lactate dehydrogenase 1 from Lactiplantibacillus plantarum (strain ATCC BAA-793 / NCIMB 8826 / WCFS1) (Lactobacillus plantarum).